Consider the following 166-residue polypeptide: MWTAPVLLWVLGSVWFWDSAQGGAIGALEDDLVTPGPGDDMVNPGLEDRIETTDTTGELDKSTAKAPLVPTQPPIEELPTSGTSDHDHKEHESTTTVKAVTSHSTDKKTTHPNRDNAGGETQTTDKKDGLAVVTLVGIIIGVLLAIGFIGGIIIVVMRKISGRFSP.

An N-terminal signal peptide occupies residues 1–22 (MWTAPVLLWVLGSVWFWDSAQG). Residues 23–135 (GAIGALEDDL…KKDGLAVVTL (113 aa)) lie on the Extracellular side of the membrane. O-linked (GalNAc...) threonine glycosylation is found at Thr-34, Thr-52, Thr-55, and Thr-56. Residues 54–63 (DTTGELDKST) show a composition bias toward basic and acidic residues. The tract at residues 54–124 (DTTGELDKST…DNAGGETQTT (71 aa)) is disordered. A glycan (O-linked (GalNAc...) serine) is linked at Ser-62. O-linked (GalNAc...) threonine glycans are attached at residues Thr-63, Thr-71, and Thr-80. O-linked (GalNAc...) serine glycosylation occurs at Ser-81. An O-linked (GalNAc...) threonine glycan is attached at Thr-83. Ser-84 carries an O-linked (GalNAc...) serine glycan. Basic and acidic residues predominate over residues 84–93 (SDHDHKEHES). 7 O-linked (GalNAc...) threonine glycosylation sites follow: Thr-94, Thr-95, Thr-96, Thr-101, Thr-105, Thr-109, and Thr-110. Polar residues predominate over residues 94 to 103 (TTTVKAVTSH). Over residues 104–114 (STDKKTTHPNR) the composition is skewed to basic and acidic residues. The chain crosses the membrane as a helical span at residues 136–156 (VGIIIGVLLAIGFIGGIIIVV). A requires for dimerization and lipid rafts association region spans residues 137–141 (GIIIG). At 157–166 (MRKISGRFSP) the chain is on the cytoplasmic side. Residues 158–159 (RK) form a requires for interaction with MSN and EZR region.

The protein belongs to the podoplanin family. As to quaternary structure, homodimer. Interacts with CLEC1B; the interaction is independent of CLEC1B glycosylation and activates CLEC1B; the interaction is dependent of sialic acid on O-glycans. Interacts with CD9; this interaction is homophilic and attenuates platelet aggregation and pulmonary metastasis induced by PDPN. Interacts with LGALS8; the interaction is glycosylation-dependent; may participate in connection of the lymphatic endothelium to the surrounding extracellular matrix. Interacts with HSPA9. Interacts (via extracellular domain) with CD44; this interaction is required for PDPN-mediated directional migration and regulation of lamellipodia extension/stabilization during cell spreading and migration. Interacts (via cytoplasmic domain) with MSN and EZR; activates RHOA and promotes epithelial-mesenchymal transition. Interacts with CCL21; relocalized PDPN to the basolateral membrane. Post-translationally, extensively O-glycosylated. Contains sialic acid residues. O-glycosylation is necessary for platelet aggregation activity. Disialylated at Thr-52; sialic acid is critical for platelet-aggregating activity and for CLEC1B interaction. The N-terminus is blocked. In adult kidney, expressed on the urinary surface and foot processes of podocytes and in parietal epithelial cells of Bowman's capsule where it is localized to luminal surfaces. In lung, expressed exclusively on luminal surfaces of type I alveolar epithelial cells and pleural mesothelial cells. Not expressed in type II alveolar cells. In bone, expressed in osteocytes and osteoblasts. In spleen, liver, stomach and intestine, expressed in mesoepithelium. Also expressed in thymic epithelial cells, choroid plexus and leptomeninges.

It localises to the membrane. The protein resides in the cell projection. The protein localises to the lamellipodium membrane. Its subcellular location is the filopodium membrane. It is found in the microvillus membrane. It localises to the ruffle membrane. The protein resides in the membrane raft. The protein localises to the apical cell membrane. Its subcellular location is the basolateral cell membrane. It is found in the invadopodium. Mediates effects on cell migration and adhesion through its different partners. During development plays a role in blood and lymphatic vessels separation by binding CLEC1B, triggering CLEC1B activation in platelets and leading to platelet activation and/or aggregation. Interaction with CD9, on the contrary, attenuates platelet aggregation and pulmonary metastasis induced by PDPN. Mediates effects on cell migration and adhesion through its different partners. Through MSN or EZR interaction promotes epithelial-mesenchymal transition (EMT) leading to ERZ phosphorylation and triggering RHOA activation leading to cell migration increase and invasiveness. Interaction with CD44 promotes directional cell migration in epithelial and tumor cells. In lymph nodes (LNs), controls fibroblastic reticular cells (FRCs) adhesion to the extracellular matrix (ECM) and contraction of the actomyosin by maintaining ERM proteins (EZR; MSN and RDX) and MYL9 activation through association with unknown transmembrane proteins. Engagement of CLEC1B by PDPN promotes FRCs relaxation by blocking lateral membrane interactions leading to reduction of ERM proteins (EZR; MSN and RDX) and MYL9 activation. Through binding with LGALS8 may participate in connection of the lymphatic endothelium to the surrounding extracellular matrix. In keratinocytes, induces changes in cell morphology showing an elongated shape, numerous membrane protrusions, major reorganization of the actin cytoskeleton, increased motility and decreased cell adhesion. Controls invadopodia stability and maturation leading to efficient degradation of the extracellular matrix (ECM) in tumor cells through modulation of RHOC activity in order to activate ROCK1/ROCK2 and LIMK1/LIMK2 and inactivation of CFL1. Required for normal lung cell proliferation and alveolus formation at birth. Does not function as a water channel or as a regulator of aquaporin-type water channels. Does not have any effect on folic acid or amino acid transport. The protein is Podoplanin of Rattus norvegicus (Rat).